A 667-amino-acid chain; its full sequence is Tripartite terminase subunit 3 (667 aa).

Residues 208 to 215 (VPRRHGKT) carry the Walker A motif motif. The short motif at 301–306 (LLIVDE) is the Walker B motif element. The active-site For ATPase activity is the E306. Active-site for nuclease activity residues include D459, E530, and D644.

Belongs to the herpesviridae TRM3 protein family. In terms of assembly, interacts with the terminase subunits TRM1 and TRM2. Interacts with portal protein.

The protein localises to the host nucleus. In terms of biological role, component of the molecular motor that translocates viral genomic DNA in empty capsid during DNA packaging. Forms a tripartite terminase complex together with TRM1 and TRM2 in the host cytoplasm. Once the complex reaches the host nucleus, it interacts with the capsid portal vertex. This portal forms a ring in which genomic DNA is translocated into the capsid. TRM3 carries an RNase H-like nuclease activity that plays an important role for the cleavage of concatemeric viral DNA into unit length genomes. This Human herpesvirus 6A (strain Uganda-1102) (HHV-6 variant A) protein is Tripartite terminase subunit 3.